The primary structure comprises 191 residues: Thymidylate kinase (191 aa).

7 to 14 (GVDGVGKS) lines the ATP pocket.

Belongs to the thymidylate kinase family.

It catalyses the reaction dTMP + ATP = dTDP + ADP. Phosphorylation of dTMP to form dTDP in both de novo and salvage pathways of dTTP synthesis. The protein is Thymidylate kinase of Helicobacter pylori (strain HPAG1).